The following is a 643-amino-acid chain: MSKEKASIGNGPGGIGRRQFLGTAALAGLAGVVACTDKGAAPAAAAVGAPASGAHGAAHGAGASVHLKPGELDTYYGLWSGGHTGDMRVLGLPSGREILRIPCFVPDALVGWGITNESKKVMGARPDGTLRYTVADTHHTHASYKDGNYDGRYAWVNDKINSRIARIRLDYFICDKITELPNVQGFHGIFPDKRDPVDTKINYTTRVFCGGEFGIPLPSAPTEDAGKYRSLFTCVDAETMAVRWQVLIDGNCDLVATSYDGKLAATNQYNTENGAHFEDMMSAERDACVFFNIARIEAAVQAGKFKTYGDSKVPVVDGTQAANKDPKTALTAYVSVPKNPHGVNASPDQKYFICAGKLSPTATVIELSRVLGWFDGKQEKLDDAIVAEVELGLGPLHTAFDGRGNAYTTLFLDSQLVKWNLDAAIKFHKGDKNAKYVVDRLDLQYQPGHVNASQSETVAADGKYLAVGCKFSKDRFLPVGPLHPENEQLIDISGQKMVLMADHPVRGEPHDFIIFKRELVRPKQVYALDDFPLAIKDPKESGVFRNGRKVTVKITSQAPAFSLREFKLKKGDEVTLILTNLDKIEDLTHGFAIPKYNVNFIVNPQETASVTFVADKPGVFWCYCTHFCHALHLEMRTRMIVEA.

Residues Met-1–Ala-46 constitute a signal peptide (tat-type signal). 3 residues coordinate Cu cation: His-138, His-139, and His-187. Ca(2+)-binding residues include Tyr-269, Glu-272, Met-280, Asp-286, and Asn-339. Residues His-341, His-397, and His-449 each coordinate Cu cation. Lys-470 and Glu-485 together coordinate Ca(2+). Residues His-510, His-589, Cys-624, His-626, Cys-628, His-632, and Met-635 each contribute to the Cu cation site. The interval Arg-548 to Ala-643 is COX2-like.

This sequence belongs to the NosZ family. In the C-terminal section; belongs to the cytochrome c oxidase subunit 2 family. Homodimer. Requires Ca(2+) as cofactor. Cu cation is required as a cofactor. Predicted to be exported by the Tat system. The position of the signal peptide cleavage has not been experimentally proven.

The protein resides in the periplasm. The enzyme catalyses N2 + 2 Fe(III)-[cytochrome c] + H2O = nitrous oxide + 2 Fe(II)-[cytochrome c] + 2 H(+). The protein operates within nitrogen metabolism; nitrate reduction (denitrification); dinitrogen from nitrate: step 4/4. In terms of biological role, nitrous-oxide reductase is part of a bacterial respiratory system which is activated under anaerobic conditions in the presence of nitrate or nitrous oxide. The sequence is that of Nitrous-oxide reductase (nosZ) from Cupriavidus necator (strain ATCC 17699 / DSM 428 / KCTC 22496 / NCIMB 10442 / H16 / Stanier 337) (Ralstonia eutropha).